Consider the following 343-residue polypeptide: Uroporphyrinogen decarboxylase (343 aa).

Residues 25 to 29 (RQAGR), Asp75, Tyr152, Ser207, and His323 each bind substrate.

The protein belongs to the uroporphyrinogen decarboxylase family. Homodimer.

Its subcellular location is the cytoplasm. It carries out the reaction uroporphyrinogen III + 4 H(+) = coproporphyrinogen III + 4 CO2. Its pathway is porphyrin-containing compound metabolism; protoporphyrin-IX biosynthesis; coproporphyrinogen-III from 5-aminolevulinate: step 4/4. In terms of biological role, catalyzes the decarboxylation of four acetate groups of uroporphyrinogen-III to yield coproporphyrinogen-III. In Jannaschia sp. (strain CCS1), this protein is Uroporphyrinogen decarboxylase.